Reading from the N-terminus, the 176-residue chain is NAD(P)H-quinone oxidoreductase subunit 6, chloroplastic (176 aa).

The next 5 helical transmembrane spans lie at 10–30 (ILML…VLLT), 33–53 (IYSA…YFLL), 60–80 (VAQL…AVMF), 95–115 (IGDG…MTTI), and 152–172 (FYLP…GAIT).

It belongs to the complex I subunit 6 family. As to quaternary structure, NDH is composed of at least 16 different subunits, 5 of which are encoded in the nucleus.

The protein resides in the plastid. It localises to the chloroplast thylakoid membrane. It carries out the reaction a plastoquinone + NADH + (n+1) H(+)(in) = a plastoquinol + NAD(+) + n H(+)(out). The enzyme catalyses a plastoquinone + NADPH + (n+1) H(+)(in) = a plastoquinol + NADP(+) + n H(+)(out). Its function is as follows. NDH shuttles electrons from NAD(P)H:plastoquinone, via FMN and iron-sulfur (Fe-S) centers, to quinones in the photosynthetic chain and possibly in a chloroplast respiratory chain. The immediate electron acceptor for the enzyme in this species is believed to be plastoquinone. Couples the redox reaction to proton translocation, and thus conserves the redox energy in a proton gradient. This chain is NAD(P)H-quinone oxidoreductase subunit 6, chloroplastic (ndhG), found in Lolium perenne (Perennial ryegrass).